Reading from the N-terminus, the 191-residue chain is COP9 signalosome complex subunit 8 (191 aa).

Residues 6 to 179 enclose the PCI domain; that stretch reads MMAELDEKLL…VSLVPNEQQL (174 aa).

Belongs to the CSN8 family. As to quaternary structure, component of the CSN complex, probably composed of cops1, cops2, cops3, cops4, cops5, cops6, cops7, cops8 and cops9.

Its subcellular location is the cytoplasm. The protein localises to the nucleus. Its function is as follows. Component of the COP9 signalosome complex (CSN), a complex involved in various cellular and developmental processes. The CSN complex is an essential regulator of the ubiquitin (Ubl) conjugation pathway by mediating the deneddylation of the cullin subunits of E3 ligase complexes, leading to modify the Ubl ligase activity. In Danio rerio (Zebrafish), this protein is COP9 signalosome complex subunit 8 (cops8).